The primary structure comprises 150 residues: Classical arabinogalactan protein 6 (150 aa).

The first 20 residues, 1 to 20 (MARQFVVLVLLTLTIATAFA), serve as a signal peptide directing secretion. Composition is skewed to low complexity over residues 19–75 (FAAD…SPAA) and 85–98 (SASSPSDSAEAPTV). The segment at 19–131 (FAADAPSASP…ESPKSGAVTT (113 aa)) is disordered. The GPI-anchor amidated serine moiety is linked to residue serine 126. The propeptide at 127–150 (GAVTTAKFSVVGTVATVGFFFFSF) is removed in mature form.

Belongs to the classical AGP family. In terms of processing, O-glycosylated on the hydroxyproline residues. In terms of tissue distribution, expressed in the anthers.

It localises to the cell membrane. Proteoglycan that seems to be implicated in diverse developmental roles such as differentiation, cell-cell recognition, embryogenesis and programmed cell death. Plays an important role during the formation of the nexine layer of the pollen wall. The sequence is that of Classical arabinogalactan protein 6 (AGP6) from Arabidopsis thaliana (Mouse-ear cress).